Consider the following 104-residue polypeptide: NADH-quinone oxidoreductase subunit K (104 aa).

Transmembrane regions (helical) follow at residues 4 to 24 (VPASAYLTLAIILFCIGLFGA), 31 to 51 (VIVLVCIELMLNAANLNLVAF), and 67 to 87 (LFTMAVAAAEAAVGLAILIAL).

It belongs to the complex I subunit 4L family. NDH-1 is composed of 14 different subunits. Subunits NuoA, H, J, K, L, M, N constitute the membrane sector of the complex.

The protein localises to the cell membrane. It carries out the reaction a quinone + NADH + 5 H(+)(in) = a quinol + NAD(+) + 4 H(+)(out). NDH-1 shuttles electrons from NADH, via FMN and iron-sulfur (Fe-S) centers, to quinones in the respiratory chain. The immediate electron acceptor for the enzyme in this species is believed to be a menaquinone. Couples the redox reaction to proton translocation (for every two electrons transferred, four hydrogen ions are translocated across the cytoplasmic membrane), and thus conserves the redox energy in a proton gradient. The polypeptide is NADH-quinone oxidoreductase subunit K (Bacillus cereus (strain Q1)).